A 21-amino-acid polypeptide reads, in one-letter code: Large ribosomal subunit protein uL30 (21 aa).

The span at 1–15 shows a compositional bias: polar residues; it reads AKTENKTVTVRQTAS. The tract at residues 1–21 is disordered; sequence AKTENKTVTVRQTASPIXXXK.

This sequence belongs to the universal ribosomal protein uL30 family. Part of the 50S ribosomal subunit.

This Brevundimonas diminuta (Pseudomonas diminuta) protein is Large ribosomal subunit protein uL30 (rpmD).